Consider the following 413-residue polypeptide: SET and MYND domain-containing protein DDB_G0273591 (413 aa).

The 306-residue stretch at D6 to L311 folds into the SET domain. An MYND-type zinc finger spans residues C51–C95. Positions D205–N232 are disordered. Residues N216 to R243 adopt a coiled-coil conformation.

It belongs to the class V-like SAM-binding methyltransferase superfamily.

Functionally, probable methyltransferase. The polypeptide is SET and MYND domain-containing protein DDB_G0273591 (Dictyostelium discoideum (Social amoeba)).